A 320-amino-acid polypeptide reads, in one-letter code: Cytosolic Fe-S cluster assembly factor NUBP1 (320 aa).

Methionine 1 carries the post-translational modification N-acetylmethionine. The [4Fe-4S] cluster site is built by cysteine 8, cysteine 22, cysteine 25, and cysteine 31. ATP is bound at residue 62-69 (GKGGVGKS). Cysteine 235 and cysteine 238 together coordinate [4Fe-4S] cluster. Serine 319 is subject to Phosphoserine.

It belongs to the Mrp/NBP35 ATP-binding proteins family. NUBP1/NBP35 subfamily. Heterotetramer of 2 NUBP1 and 2 NUBP2 chains. Interacts with KIFC1. Interacts with NUBP2. Interacts with the BBS/CCT complex subunit CCT1. [4Fe-4S] cluster is required as a cofactor.

It localises to the cytoplasm. Its subcellular location is the nucleus. The protein localises to the cell projection. It is found in the cytoskeleton. The protein resides in the cilium axoneme. It localises to the cilium basal body. Its subcellular location is the microtubule organizing center. The protein localises to the centrosome. It is found in the centriole. Component of the cytosolic iron-sulfur (Fe/S) protein assembly (CIA) machinery. Required for maturation of extramitochondrial Fe-S proteins. The NUBP1-NUBP2 heterotetramer forms a Fe-S scaffold complex, mediating the de novo assembly of an Fe-S cluster and its transfer to target apoproteins. Implicated in the regulation of centrosome duplication. Negatively regulates cilium formation and structure. The sequence is that of Cytosolic Fe-S cluster assembly factor NUBP1 from Homo sapiens (Human).